A 305-amino-acid chain; its full sequence is Flagellin FlaB2 (305 aa).

Positions 1 to 18 are cleaved as a propeptide — propeptide; it reads MGLQKIVKKYNKKMKRKG.

It belongs to the archaeal flagellin family. In terms of processing, glycosylated.

Its subcellular location is the archaeal flagellum. In terms of biological role, flagellin is the subunit protein which polymerizes to form the filaments of archaeal flagella. This is Flagellin FlaB2 from Saccharolobus shibatae (strain ATCC 51178 / DSM 5389 / JCM 8931 / NBRC 15437 / B12) (Sulfolobus shibatae).